The chain runs to 109 residues: Guanylin (109 aa).

The N-terminal stretch at 1–21 (MNTFLFPTLCLLGVWAALAGG) is a signal peptide. A propeptide spanning residues 22–94 (VTVKDGEFSF…LERLETIAQD (73 aa)) is cleaved from the precursor. 3 cysteine pairs are disulfide-bonded: Cys-63/Cys-76, Cys-98/Cys-106, and Cys-101/Cys-109.

It belongs to the guanylin family.

The protein localises to the secreted. Its function is as follows. Endogenous activator of intestinal guanylate cyclase. It stimulates this enzyme through the same receptor binding region as the heat-stable enterotoxins. The sequence is that of Guanylin (GUCA2A) from Sus scrofa (Pig).